The primary structure comprises 131 residues: Global transcriptional regulator Spx 1 (131 aa).

Residues cysteine 10 and cysteine 13 are joined by a disulfide bond.

It belongs to the ArsC family. Spx subfamily. In terms of assembly, interacts with the C-terminal domain of the alpha subunit of the RNAP.

The protein localises to the cytoplasm. Its function is as follows. Global transcriptional regulator that plays a key role in stress response and exerts either positive or negative regulation of genes. Acts by interacting with the C-terminal domain of the alpha subunit of the RNA polymerase (RNAP). This interaction can enhance binding of RNAP to the promoter region of target genes and stimulate their transcription, or block interaction of RNAP with activator. This is Global transcriptional regulator Spx 1 from Bacillus anthracis.